The chain runs to 445 residues: C4-dicarboxylate transport protein (445 aa).

8 consecutive transmembrane segments (helical) span residues 17–37, 56–76, 91–111, 157–177, 200–220, 233–253, 319–339, and 367–387; these read FYQILYVQVLVAIVIGVLLGY, LVKMIIAPVIFLTVTTGIAAM, VYFLVFSTLALIIGMVVSHIV, FVGGDILQVLFVAVLFGLSLA, LVAILMKAAPIGAFGAMAFTI, MLVGTFYATSVLFVVVVLGMV, IYMTMAALFIAQACDIPLSLG, and AATLSVVPTVPVAGMALILGV.

This sequence belongs to the dicarboxylate/amino acid:cation symporter (DAACS) (TC 2.A.23) family.

Its subcellular location is the cell inner membrane. In terms of biological role, responsible for the transport of dicarboxylates such as succinate, fumarate, and malate from the periplasm across the membrane. The protein is C4-dicarboxylate transport protein of Bordetella avium (strain 197N).